The following is an 85-amino-acid chain: Kappa-theraphotoxin-Gr1a (85 aa).

The signal sequence occupies residues 1-21; sequence MKTSVFAAILGLALFAVLCSG. Residues 22-49 constitute a propeptide that is removed on maturation; sequence SELQEKDLKETLLSAIMETALEAQPEER. Cystine bridges form between C51–C65, C58–C70, and C64–C77. An involved in active face region spans residues 53–55; the sequence is YLF.

It belongs to the neurotoxin 10 (Hwtx-1) family. 09 (HaTx) subfamily. As to expression, expressed by the venom gland.

It localises to the secreted. In terms of biological role, inhibits Kv2.1/KCNB1 and Kv4.2/KCND2 voltage-gated potassium channels. Acts as a gating modifier by shifting channel openings to more depolarized voltages and acts via the occupancy of multiple binding sites on the channel. The toxin binding sites are situated on the S3-S4 extracellular linker of the channel. At least two hanatoxin molecules can occupy the Kv2.1/KCNB1 channel, and maybe more (three or four). Can also inhibit calcium channels (Cav2.1/CACNA1A). Needs to partition into the membrane in order to bind to the channel. The sequence is that of Kappa-theraphotoxin-Gr1a from Grammostola rosea (Chilean rose tarantula).